A 326-amino-acid polypeptide reads, in one-letter code: MSKSNQKIASIEQLSNNEGIISALAFDQRGALKRMMAKHQTEEPTVAQIEQLKVLVAEELTQYASSILLDPEYGLPASDARNKDCGLLLAYEKTGYDVNAKGRLPDCLVEWSAKRLKEQGANAVKFLLYYDVDDAEEINIQKKAYIERIGSECVAEDIPFFLEVLTYDDNIPDNGSVEFAKVKPRKVNEAMKLFSEPRFNVDVLKVEVPVNMKYVEGFAEGEVVYTKEEAAQHFKDQDAATHLPYIYLSAGVSAELFQETLKFAHEAGAKFNGVLCGRATWSGAVQVYIEQGEDAAREWLRTTGFKNIDDLNKVLKDTATSWKQRK.

Belongs to the aldolase LacD family.

It catalyses the reaction D-tagatofuranose 1,6-bisphosphate = D-glyceraldehyde 3-phosphate + dihydroxyacetone phosphate. It participates in carbohydrate metabolism; D-tagatose 6-phosphate degradation; D-glyceraldehyde 3-phosphate and glycerone phosphate from D-tagatose 6-phosphate: step 2/2. This is Tagatose 1,6-diphosphate aldolase from Staphylococcus aureus (strain Mu3 / ATCC 700698).